The primary structure comprises 435 residues: AP-2 complex subunit mu (435 aa).

S45 bears the Phosphoserine mark. T156 is subject to Phosphothreonine. One can recognise an MHD domain in the interval 170–434 (RNELFLDVLE…IGRSGIYETR (265 aa)). A 1,2-diacyl-sn-glycero-3-phospho-(1D-myo-inositol-3,4,5-trisphosphate) is bound by residues K341, K345, and K354.

The protein belongs to the adaptor complexes medium subunit family. As to quaternary structure, adaptor protein complex 2 (AP-2) is a heterotetramer composed of two large adaptins (alpha-type subunit AP2A1 or AP2A2 and beta-type subunit AP2B1), a medium adaptin (mu-type subunit AP2M1) and a small adaptin (sigma-type subunit AP2S1). Interacts with ATP6V1H and MEGF10. Interacts with EGFR. Interacts with PIP5K1C; tyrosine phosphorylation of PIP5K1C weakens the interaction. Interacts with KIAA0319; required for clathrin-mediated endocytosis of KIAA0319. Interacts with DVL2 (via DEP domain). Interacts with KCNQ1; mediates estrogen-induced internalization via clathrin-coated vesicles. Together with AP2A1 or AP2A2 and AP2B1, it interacts with ADAM10; this interaction facilitates ADAM10 endocytosis from the plasma membrane during long-term potentiation in hippocampal neurons. Probably interacts with ACE2 (via endocytic sorting signal motif); the interaction is inhibited by ACE2 phosphorylation. Interacts with RALBP1; the interaction is direct. Interacts with TMEM106B (via N-terminus). Post-translationally, phosphorylation at Thr-156 increases the affinity of the AP-2 complex for cargo membrane proteins during the initial stages of endocytosis.

Its subcellular location is the cell membrane. It is found in the membrane. The protein resides in the coated pit. Its function is as follows. Component of the adaptor protein complex 2 (AP-2). Adaptor protein complexes function in protein transport via transport vesicles in different membrane traffic pathways. Adaptor protein complexes are vesicle coat components and appear to be involved in cargo selection and vesicle formation. AP-2 is involved in clathrin-dependent endocytosis in which cargo proteins are incorporated into vesicles surrounded by clathrin (clathrin-coated vesicles, CCVs) which are destined for fusion with the early endosome. The clathrin lattice serves as a mechanical scaffold but is itself unable to bind directly to membrane components. Clathrin-associated adaptor protein (AP) complexes which can bind directly to both the clathrin lattice and to the lipid and protein components of membranes are considered to be the major clathrin adaptors contributing the CCV formation. AP-2 also serves as a cargo receptor to selectively sort the membrane proteins involved in receptor-mediated endocytosis. AP-2 seems to play a role in the recycling of synaptic vesicle membranes from the presynaptic surface. AP-2 recognizes Y-X-X-[FILMV] (Y-X-X-Phi) and [ED]-X-X-X-L-[LI] endocytosis signal motifs within the cytosolic tails of transmembrane cargo molecules. AP-2 may also play a role in maintaining normal post-endocytic trafficking through the ARF6-regulated, non-clathrin pathway. During long-term potentiation in hippocampal neurons, AP-2 is responsible for the endocytosis of ADAM10. The AP-2 mu subunit binds to transmembrane cargo proteins; it recognizes the Y-X-X-Phi motifs. The surface region interacting with to the Y-X-X-Phi motif is inaccessible in cytosolic AP-2, but becomes accessible through a conformational change following phosphorylation of AP-2 mu subunit at Thr-156 in membrane-associated AP-2. The membrane-specific phosphorylation event appears to involve assembled clathrin which activates the AP-2 mu kinase AAK1. Plays a role in endocytosis of frizzled family members upon Wnt signaling. This chain is AP-2 complex subunit mu (AP2M1), found in Pongo abelii (Sumatran orangutan).